Consider the following 247-residue polypeptide: Fibroblast growth factor 14 (247 aa).

Disordered regions lie at residues 1–38 (MAAA…KNRG) and 214–247 (VGET…SKTT). Basic and acidic residues predominate over residues 15-25 (QAREQHWDRPS).

Belongs to the heparin-binding growth factors family. Interacts with SCN8A. Nervous system.

The protein localises to the nucleus. In terms of biological role, probably involved in nervous system development and function. This is Fibroblast growth factor 14 (FGF14) from Homo sapiens (Human).